The sequence spans 223 residues: Ribose-5-phosphate isomerase A (223 aa).

Substrate-binding positions include 29–32 (TGST), 82–85 (DGAD), and 95–98 (KGGG). Glu104 functions as the Proton acceptor in the catalytic mechanism. Lys122 provides a ligand contact to substrate.

This sequence belongs to the ribose 5-phosphate isomerase family. As to quaternary structure, homodimer.

The enzyme catalyses aldehydo-D-ribose 5-phosphate = D-ribulose 5-phosphate. It participates in carbohydrate degradation; pentose phosphate pathway; D-ribose 5-phosphate from D-ribulose 5-phosphate (non-oxidative stage): step 1/1. Its function is as follows. Catalyzes the reversible conversion of ribose-5-phosphate to ribulose 5-phosphate. The sequence is that of Ribose-5-phosphate isomerase A from Neisseria gonorrhoeae (strain ATCC 700825 / FA 1090).